The primary structure comprises 376 residues: DNA polymerase IV (376 aa).

Positions 6-187 (IIHIDMDAFF…LSIGKFYGVG (182 aa)) constitute a UmuC domain. Residues Asp-10 and Asp-105 each coordinate Mg(2+). Glu-106 is a catalytic residue.

The protein belongs to the DNA polymerase type-Y family. As to quaternary structure, monomer. It depends on Mg(2+) as a cofactor.

The protein localises to the cytoplasm. The catalysed reaction is DNA(n) + a 2'-deoxyribonucleoside 5'-triphosphate = DNA(n+1) + diphosphate. Its function is as follows. Poorly processive, error-prone DNA polymerase involved in untargeted mutagenesis. Copies undamaged DNA at stalled replication forks, which arise in vivo from mismatched or misaligned primer ends. These misaligned primers can be extended by PolIV. Exhibits no 3'-5' exonuclease (proofreading) activity. May be involved in translesional synthesis, in conjunction with the beta clamp from PolIII. The sequence is that of DNA polymerase IV from Desulfotalea psychrophila (strain LSv54 / DSM 12343).